Reading from the N-terminus, the 718-residue chain is Kinesin-2a (718 aa).

The 331-residue stretch at 5-335 (NIKVIVRCRP…LRYADRAKQI (331 aa)) folds into the Kinesin motor domain. ATP is bound at residue 97–104 (GQTGAGKT). Residues G100, G102, K103, T104, and W105 each coordinate ADP. Mg(2+) is bound at residue T104. The stretch at 432–477 (SRKAADELEAKRRALAEAKQKRESELEQKEALNKEAIVTLTDLKSQ) forms a coiled coil.

Belongs to the TRAFAC class myosin-kinesin ATPase superfamily. Kinesin family. Kinesin II subfamily. In terms of assembly, monomer.

Its subcellular location is the cell projection. The protein localises to the cilium. It is found in the flagellum. It localises to the cytoplasm. The protein resides in the cytoskeleton. Its subcellular location is the flagellum axoneme. The protein localises to the flagellum basal body. Functionally, involved in anterograde intraflagellar transport (IFT). Involved in flagellar assembly. This chain is Kinesin-2a, found in Giardia intestinalis (strain ATCC 50803 / WB clone C6) (Giardia lamblia).